We begin with the raw amino-acid sequence, 105 residues long: Thioredoxin (105 aa).

The 104-residue stretch at 2 to 105 (VKQIDSKDAF…KLEATINEFV (104 aa)) folds into the Thioredoxin domain. Lys3 is subject to N6-acetyllysine. The residue at position 8 (Lys8) is an N6-succinyllysine. Residues Cys32 and Cys35 each act as nucleophile in the active site. A disulfide bridge links Cys32 with Cys35. Lys39 bears the N6-acetyllysine mark. Residues Cys62 and Cys69 each carry the S-nitrosocysteine modification. Cys73 is subject to S-nitrosocysteine; alternate. Lys94 carries the N6-acetyllysine; alternate modification. Lys94 carries the N6-succinyllysine; alternate modification.

It belongs to the thioredoxin family. In terms of assembly, homodimer; disulfide-linked. Interacts with TXNIP through the redox-active site. Interacts with MAP3K5 and CASP3. Interacts with APEX1; the interaction stimulates the FOS/JUN AP-1 DNA-binding activity in a redox-dependent manner. In terms of processing, in the fully reduced protein, both Cys-69 and Cys-73 are nitrosylated in response to nitric oxide (NO). When two disulfide bonds are present in the protein, only Cys-73 is nitrosylated. Cys-73 can serve as donor for nitrosylation of target proteins.

It is found in the nucleus. Its subcellular location is the cytoplasm. The protein resides in the secreted. In terms of biological role, participates in various redox reactions through the reversible oxidation of its active center dithiol to a disulfide and catalyzes dithiol-disulfide exchange reactions. Plays a role in the reversible S-nitrosylation of cysteine residues in target proteins, and thereby contributes to the response to intracellular nitric oxide. Nitrosylates the active site Cys of CASP3 in response to nitric oxide (NO), and thereby inhibits caspase-3 activity. Induces the FOS/JUN AP-1 DNA binding activity in ionizing radiation (IR) cells through its oxidation/reduction status and stimulates AP-1 transcriptional activity. The sequence is that of Thioredoxin (TXN) from Callithrix jacchus (White-tufted-ear marmoset).